The sequence spans 1480 residues: Cystic fibrosis transmembrane conductance regulator (1480 aa).

Residues 1–77 are Cytoplasmic-facing; the sequence is MQRSPLEKAS…KLINALRRCF (77 aa). A helical transmembrane segment spans residues 78-98; it reads FWRFMFYGIFLYLGEVTKAVQ. The 285-residue stretch at 81–365 folds into the ABC transmembrane type-1 1 domain; sequence FMFYGIFLYL…WAVQTWYDSL (285 aa). The Extracellular portion of the chain corresponds to 99–122; sequence PLLLGRIIASYDPDNKEERSIAIY. A helical membrane pass occupies residues 123-146; the sequence is LGIGLCLLFIVRTLLLHPAIFGLH. At 147 to 195 the chain is on the cytoplasmic side; sequence HIGMQMRIAMFSLIYKKTLKLSSRVLDKISIGQLVSLLSNNLNKFDEGL. Residues 196–216 traverse the membrane as a helical segment; it reads ALAHFVWIAPLQVALLMGLIW. Residues 217 to 222 are Extracellular-facing; that stretch reads ELLQAS. The chain crosses the membrane as a helical span at residues 223 to 243; that stretch reads AFCGLGFLIVLALFQAGLGRM. Residues 244-298 lie on the Cytoplasmic side of the membrane; sequence MMKYRDQRAGKISERLVITSEMIENIQSVKAYCWEEAMEKMIENLRQTELKLTRK. A helical membrane pass occupies residues 299–319; the sequence is AAYVRYFNSSAFFFSGFFVVF. Residues 320–339 lie on the Extracellular side of the membrane; the sequence is LSVLPYALIKGIVLRKIFTT. Residues 340 to 358 form a helical membrane-spanning segment; that stretch reads ISFCIVLRMAVTRQFPWAV. The Cytoplasmic segment spans residues 359–858; it reads QTWYDSLGAI…YLRYITVHKS (500 aa). ATP is bound by residues tryptophan 401, serine 434, 458–465, and glutamine 493; that span reads GSTGAGKT. Residues 423 to 646 enclose the ABC transporter 1 domain; sequence NGDDSLFFSN…RPDFSSKLMG (224 aa). A lipid anchor (S-palmitoyl cysteine) is attached at cysteine 524. Serine 549 and serine 660 each carry phosphoserine. Positions 654–831 are disordered R region; it reads SAERRNSILT…EEINEEDLKE (178 aa). Serine 670 bears the Phosphoserine; by PKA mark. Serine 686 carries the phosphoserine modification. Lysine 688 is covalently cross-linked (Glycyl lysine isopeptide (Lys-Gly) (interchain with G-Cter in ubiquitin)). Residues serine 700 and serine 712 each carry the phosphoserine modification. Threonine 717 bears the Phosphothreonine mark. Residues serine 737, serine 753, serine 768, serine 790, serine 795, and serine 813 each carry the phosphoserine modification. The chain crosses the membrane as a helical span at residues 859-879; the sequence is LIFVLIWCLVIFLAEVAASLV. One can recognise an ABC transmembrane type-1 2 domain in the interval 859-1155; sequence LIFVLIWCLV…AVNSSIDVDS (297 aa). Residues 880 to 918 are Extracellular-facing; sequence VLWLLGNTPLQDKGNSTHSRNNSYAVIITSTSSYYVFYI. Asparagine 894 and asparagine 900 each carry an N-linked (GlcNAc...) asparagine glycan. The chain crosses the membrane as a discontinuously helical span at residues 919–939; that stretch reads YVGVADTLLAMGFFRGLPLVH. The Cytoplasmic segment spans residues 940 to 990; it reads TLITVSKILHHKMLHSVLQAPMSTLNTLKAGGILNRFSKDIAILDDLLPLT. The chain crosses the membrane as a helical span at residues 991 to 1011; sequence IFDFIQLLLIVIGAIAVVAVL. Residues 1012-1013 are Extracellular-facing; the sequence is QP. The helical transmembrane segment at 1014–1034 threads the bilayer; it reads YIFVATVPVIVAFIMLRAYFL. The Cytoplasmic portion of the chain corresponds to 1035 to 1095; that stretch reads QTSQQLKQLE…TANWFLYLST (61 aa). A helical membrane pass occupies residues 1096-1116; it reads LRWFQMRIEMIFVMFFIAVTF. The Extracellular portion of the chain corresponds to 1117-1130; sequence ISILTTGEGEGRIG. A helical transmembrane segment spans residues 1131–1151; sequence IILTLAMNIMSTLQWAVNSSI. The Cytoplasmic portion of the chain corresponds to 1152–1480; sequence DVDSLMRSVS…TEEEVQDTRL (329 aa). In terms of domain architecture, ABC transporter 2 spans 1210 to 1443; that stretch reads MTVKDLSAKY…RSLFRQAISP (234 aa). Residues tyrosine 1219 and 1244 to 1251 contribute to the ATP site; that span reads GRTGSGKS. The segment at 1386–1480 is interaction with GORASP2; that stretch reads RTLKQAFADC…TEEEVQDTRL (95 aa). Cysteine 1395 is lipidated: S-palmitoyl cysteine. 2 positions are modified to phosphoserine: serine 1444 and serine 1456. The disordered stretch occupies residues 1451–1480; it reads PHRNSSKGKSQPQIAALKEETEEEVQDTRL. The span at 1470–1480 shows a compositional bias: acidic residues; it reads ETEEEVQDTRL. Residues 1478–1480 carry the PDZ-binding motif; sequence TRL.

This sequence belongs to the ABC transporter superfamily. ABCC family. CFTR transporter (TC 3.A.1.202) subfamily. Monomer; does not require oligomerization for channel activity. May form oligomers in the membrane. Interacts with SLC26A3, SLC26A6 and NHERF1. Interacts with SHANK2. Interacts with MYO6. Interacts (via C-terminus) with GOPC (via PDZ domain); this promotes CFTR internalization and thereby decreases channel activity. Interacts with SLC4A7 through NHERF1. Found in a complex with MYO5B and RAB11A. Interacts with ANO1. Interacts with SLC26A8. Interacts with AHCYL1; the interaction increases CFTR activity. Interacts with CSE1L. The core-glycosylated form interacts with GORASP2 (via PDZ GRASP-type 1 domain) in respone to ER stress. Interacts with MARCHF2; the interaction leads to CFTR ubiqtuitination and degradation. Interacts with ADGRG2. Post-translationally, N-glycosylated. Phosphorylated; cAMP treatment promotes phosphorylation and activates the channel. Dephosphorylation decreases the ATPase activity (in vitro). Phosphorylation at PKA sites activates the channel. Phosphorylation at PKC sites enhances the response to phosphorylation by PKA. Phosphorylated by AMPK; this inhibits channel activity. In terms of processing, ubiquitinated, leading to its degradation in the lysosome. Deubiquitination by USP10 in early endosomes enhances its endocytic recycling to the cell membrane. Ubiquitinated by RNF185 during ER stress. Ubiquitinated by MARCHF2.

The protein localises to the apical cell membrane. It localises to the early endosome membrane. The protein resides in the cell membrane. Its subcellular location is the recycling endosome membrane. It is found in the endoplasmic reticulum membrane. The protein localises to the nucleus. The catalysed reaction is ATP + H2O + closed Cl(-) channel = ADP + phosphate + open Cl(-) channel.. It carries out the reaction chloride(in) = chloride(out). It catalyses the reaction hydrogencarbonate(in) = hydrogencarbonate(out). The enzyme catalyses ATP + H2O = ADP + phosphate + H(+). Functionally, epithelial ion channel that plays an important role in the regulation of epithelial ion and water transport and fluid homeostasis. Mediates the transport of chloride ions across the cell membrane. Possesses an intrinsic ATPase activity and utilizes ATP to gate its channel; the passive flow of anions through the channel is gated by cycles of ATP binding and hydrolysis by the ATP-binding domains. The ion channel is also permeable to HCO(3)(-); selectivity depends on the extracellular chloride concentration. Exerts its function also by modulating the activity of other ion channels and transporters. Contributes to the regulation of the pH and the ion content of the epithelial fluid layer. Modulates the activity of the epithelial sodium channel (ENaC) complex, in part by regulating the cell surface expression of the ENaC complex. May regulate bicarbonate secretion and salvage in epithelial cells by regulating the transporter SLC4A7. Can inhibit the chloride channel activity of ANO1. Plays a role in the chloride and bicarbonate homeostasis during sperm epididymal maturation and capacitation. This chain is Cystic fibrosis transmembrane conductance regulator, found in Nomascus leucogenys (Northern white-cheeked gibbon).